Here is a 279-residue protein sequence, read N- to C-terminus: Oxygen-dependent coproporphyrinogen-III oxidase (279 aa).

Position 102 (serine 102) interacts with substrate. A divalent metal cation is bound by residues histidine 106 and histidine 116. Histidine 116 functions as the Proton donor in the catalytic mechanism. A substrate-binding site is contributed by 118 to 120 (NTR). A divalent metal cation contacts are provided by histidine 149 and histidine 179. Residues 244–279 (YVEFNLLYDRGTKFGLMTDGNVEAILMSLPPEVKFN) are important for dimerization.

Belongs to the aerobic coproporphyrinogen-III oxidase family. In terms of assembly, homodimer. It depends on a divalent metal cation as a cofactor.

The protein resides in the cytoplasm. It catalyses the reaction coproporphyrinogen III + O2 + 2 H(+) = protoporphyrinogen IX + 2 CO2 + 2 H2O. Its pathway is porphyrin-containing compound metabolism; protoporphyrin-IX biosynthesis; protoporphyrinogen-IX from coproporphyrinogen-III (O2 route): step 1/1. In terms of biological role, involved in the heme biosynthesis. Catalyzes the aerobic oxidative decarboxylation of propionate groups of rings A and B of coproporphyrinogen-III to yield the vinyl groups in protoporphyrinogen-IX. The polypeptide is Oxygen-dependent coproporphyrinogen-III oxidase (Rickettsia conorii (strain ATCC VR-613 / Malish 7)).